The following is a 224-amino-acid chain: Ribose-5-phosphate isomerase A (224 aa).

Substrate is bound by residues 26–29, 82–85, and 95–98; these read TGST, DGAD, and KGGG. Glutamate 104 acts as the Proton acceptor in catalysis. Residue lysine 122 participates in substrate binding.

The protein belongs to the ribose 5-phosphate isomerase family. Homodimer.

The catalysed reaction is aldehydo-D-ribose 5-phosphate = D-ribulose 5-phosphate. It functions in the pathway carbohydrate degradation; pentose phosphate pathway; D-ribose 5-phosphate from D-ribulose 5-phosphate (non-oxidative stage): step 1/1. Functionally, catalyzes the reversible conversion of ribose-5-phosphate to ribulose 5-phosphate. The sequence is that of Ribose-5-phosphate isomerase A from Lactococcus lactis subsp. cremoris (strain MG1363).